We begin with the raw amino-acid sequence, 132 residues long: tRNA (cytidine(56)-2'-O)-methyltransferase (132 aa).

S-adenosyl-L-methionine-binding positions include Leu-35, 65–69 (GSEKV), and 83–90 (IGNQPHSE).

The protein belongs to the aTrm56 family. Homodimer.

It localises to the cytoplasm. It carries out the reaction cytidine(56) in tRNA + S-adenosyl-L-methionine = 2'-O-methylcytidine(56) in tRNA + S-adenosyl-L-homocysteine + H(+). Its function is as follows. Specifically catalyzes the AdoMet-dependent 2'-O-ribose methylation of cytidine at position 56 in tRNAs. The sequence is that of tRNA (cytidine(56)-2'-O)-methyltransferase from Sulfolobus acidocaldarius (strain ATCC 33909 / DSM 639 / JCM 8929 / NBRC 15157 / NCIMB 11770).